Consider the following 253-residue polypeptide: Imidazole glycerol phosphate synthase subunit HisF (253 aa).

Active-site residues include aspartate 11 and aspartate 130.

Belongs to the HisA/HisF family. In terms of assembly, heterodimer of HisH and HisF.

The protein localises to the cytoplasm. The catalysed reaction is 5-[(5-phospho-1-deoxy-D-ribulos-1-ylimino)methylamino]-1-(5-phospho-beta-D-ribosyl)imidazole-4-carboxamide + L-glutamine = D-erythro-1-(imidazol-4-yl)glycerol 3-phosphate + 5-amino-1-(5-phospho-beta-D-ribosyl)imidazole-4-carboxamide + L-glutamate + H(+). It participates in amino-acid biosynthesis; L-histidine biosynthesis; L-histidine from 5-phospho-alpha-D-ribose 1-diphosphate: step 5/9. Its function is as follows. IGPS catalyzes the conversion of PRFAR and glutamine to IGP, AICAR and glutamate. The HisF subunit catalyzes the cyclization activity that produces IGP and AICAR from PRFAR using the ammonia provided by the HisH subunit. This is Imidazole glycerol phosphate synthase subunit HisF from Geobacter metallireducens (strain ATCC 53774 / DSM 7210 / GS-15).